We begin with the raw amino-acid sequence, 324 residues long: DNA repair and recombination protein RadA (324 aa).

107–114 provides a ligand contact to ATP; sequence GEFGSGKS.

It belongs to the eukaryotic RecA-like protein family.

Involved in DNA repair and in homologous recombination. Binds and assemble on single-stranded DNA to form a nucleoprotein filament. Hydrolyzes ATP in a ssDNA-dependent manner and promotes DNA strand exchange between homologous DNA molecules. This Methanoculleus marisnigri (strain ATCC 35101 / DSM 1498 / JR1) protein is DNA repair and recombination protein RadA.